The primary structure comprises 610 residues: Zinc metalloproteinase-disintegrin-like 4a (610 aa).

The signal sequence occupies residues 1–20; it reads MIQVLLVTISLAVFPYQGSS. Residues 21–189 constitute a propeptide that is removed on maturation; that stretch reads VILESGNVND…KKASQSNLTP (169 aa). One can recognise a Peptidase M12B domain in the interval 199-395; it reads KYVKLFLVAD…NMPQCILKKP (197 aa). N-linked (GlcNAc...) asparagine glycosylation is present at asparagine 218. Position 286 (aspartate 286) interacts with Ca(2+). 3 cysteine pairs are disulfide-bonded: cysteine 310/cysteine 390, cysteine 350/cysteine 374, and cysteine 352/cysteine 357. Histidine 335 lines the Zn(2+) pocket. The active site involves glutamate 336. Residues histidine 339 and histidine 345 each coordinate Zn(2+). Positions 390, 405, 408, 410, 412, 415, and 418 each coordinate Ca(2+). The Disintegrin domain maps to 403–488; that stretch reads PAVCGNYFVE…AECTDSFQRN (86 aa). Cystine bridges form between cysteine 406–cysteine 435, cysteine 417–cysteine 430, cysteine 419–cysteine 425, cysteine 429–cysteine 452, cysteine 443–cysteine 449, cysteine 448–cysteine 474, cysteine 461–cysteine 481, cysteine 468–cysteine 499, cysteine 492–cysteine 504, cysteine 511–cysteine 561, cysteine 526–cysteine 572, cysteine 539–cysteine 549, cysteine 556–cysteine 598, and cysteine 592–cysteine 603. The D/ECD-tripeptide signature appears at 467 to 469; it reads ECD.

This sequence belongs to the venom metalloproteinase (M12B) family. P-III subfamily. Zn(2+) serves as cofactor. In terms of tissue distribution, expressed by the venom gland.

Its subcellular location is the secreted. In terms of biological role, snake venom metalloproteinase that impairs hemostasis in the envenomed animal. This is Zinc metalloproteinase-disintegrin-like 4a from Crotalus adamanteus (Eastern diamondback rattlesnake).